A 353-amino-acid polypeptide reads, in one-letter code: Photosystem II protein D1 (353 aa).

Thr2 carries the post-translational modification N-acetylthreonine. Position 2 is a phosphothreonine (Thr2). Helical transmembrane passes span 29–46 (YIGW…TATS), 118–133 (HFLL…EWEL), and 142–156 (WIAV…AATA). Residue His118 participates in chlorophyll a binding. Tyr126 lines the pheophytin a pocket. [CaMn4O5] cluster contacts are provided by Asp170 and Glu189. Residues 197–218 (FHMLGVAGVFGGSLFSAMHGSL) traverse the membrane as a helical segment. His198 contacts chlorophyll a. A quinone is bound by residues His215 and 264 to 265 (SF). A Fe cation-binding site is contributed by His215. A Fe cation-binding site is contributed by His272. A helical transmembrane segment spans residues 274-288 (FLAAWPVVGIWFTAL). [CaMn4O5] cluster contacts are provided by His332, Glu333, Asp342, and Ala344. A propeptide spanning residues 345 to 353 (ALEVPSLNG) is cleaved from the precursor.

This sequence belongs to the reaction center PufL/M/PsbA/D family. PSII is composed of 1 copy each of membrane proteins PsbA, PsbB, PsbC, PsbD, PsbE, PsbF, PsbH, PsbI, PsbJ, PsbK, PsbL, PsbM, PsbT, PsbX, PsbY, PsbZ, Psb30/Ycf12, at least 3 peripheral proteins of the oxygen-evolving complex and a large number of cofactors. It forms dimeric complexes. It depends on The D1/D2 heterodimer binds P680, chlorophylls that are the primary electron donor of PSII, and subsequent electron acceptors. It shares a non-heme iron and each subunit binds pheophytin, quinone, additional chlorophylls, carotenoids and lipids. D1 provides most of the ligands for the Mn4-Ca-O5 cluster of the oxygen-evolving complex (OEC). There is also a Cl(-1) ion associated with D1 and D2, which is required for oxygen evolution. The PSII complex binds additional chlorophylls, carotenoids and specific lipids. as a cofactor. In terms of processing, tyr-161 forms a radical intermediate that is referred to as redox-active TyrZ, YZ or Y-Z. Post-translationally, C-terminally processed by CTPA; processing is essential to allow assembly of the oxygen-evolving complex and thus photosynthetic growth.

The protein resides in the plastid. It localises to the chloroplast thylakoid membrane. The catalysed reaction is 2 a plastoquinone + 4 hnu + 2 H2O = 2 a plastoquinol + O2. Its function is as follows. Photosystem II (PSII) is a light-driven water:plastoquinone oxidoreductase that uses light energy to abstract electrons from H(2)O, generating O(2) and a proton gradient subsequently used for ATP formation. It consists of a core antenna complex that captures photons, and an electron transfer chain that converts photonic excitation into a charge separation. The D1/D2 (PsbA/PsbD) reaction center heterodimer binds P680, the primary electron donor of PSII as well as several subsequent electron acceptors. The protein is Photosystem II protein D1 of Lolium perenne (Perennial ryegrass).